A 372-amino-acid polypeptide reads, in one-letter code: Silphinene synthase peniA (372 aa).

Residues aspartate 116, glutamate 121, asparagine 263, serine 267, and glutamate 271 each contribute to the Mg(2+) site. Positions 116-121 (DDQFDE) match the DDXXE motif motif.

The protein belongs to the terpene synthase family. Mg(2+) serves as cofactor.

It carries out the reaction (2E,6E)-farnesyl diphosphate = silphinene + diphosphate. Its pathway is secondary metabolite biosynthesis; terpenoid biosynthesis. Sesquiterpene cyclase; part of the gene cluster that mediates the biosynthesis of penifulvin A, a potent insecticidal sesquiterpene that features a [5.5.5.6]dioxafenestrane ring. Within the pathway, peniA catalyzes the first step and generates the angular triquinane scaffold silphinene via cyclization of the linear farnesyl pyrophosphate (FPP). The cytochrome P450 monooxygenase peniB and the flavin-dependent monooxygenase peniC then catalyze a series of oxidation reactions to transform silphinene into penifulvin A. This chain is Silphinene synthase peniA, found in Penicillium patulum (Penicillium griseofulvum).